Here is a 147-residue protein sequence, read N- to C-terminus: 3-dehydroquinate dehydratase (147 aa).

Tyr23 acts as the Proton acceptor in catalysis. The substrate site is built by Asn74, His80, and Asp87. The active-site Proton donor is His100. Substrate contacts are provided by residues 101-102 (IS) and Arg111.

Belongs to the type-II 3-dehydroquinase family. As to quaternary structure, homododecamer.

The catalysed reaction is 3-dehydroquinate = 3-dehydroshikimate + H2O. Its pathway is metabolic intermediate biosynthesis; chorismate biosynthesis; chorismate from D-erythrose 4-phosphate and phosphoenolpyruvate: step 3/7. Its function is as follows. Catalyzes a trans-dehydration via an enolate intermediate. The protein is 3-dehydroquinate dehydratase of Prochlorococcus marinus (strain MIT 9215).